Consider the following 407-residue polypeptide: S-adenosylmethionine synthase (407 aa).

Histidine 15 provides a ligand contact to ATP. Residue aspartate 17 coordinates Mg(2+). A K(+)-binding site is contributed by glutamate 43. Positions 56 and 100 each coordinate L-methionine. The tract at residues glutamine 100 to glutamate 110 is flexible loop. Residues aspartate 171–lysine 173, lysine 248–phenylalanine 249, aspartate 257, arginine 263–lysine 264, alanine 280, and lysine 284 each bind ATP. L-methionine is bound at residue aspartate 257. Residue lysine 288 coordinates L-methionine.

This sequence belongs to the AdoMet synthase family. Homotetramer; dimer of dimers. Mg(2+) serves as cofactor. The cofactor is K(+).

Its subcellular location is the cytoplasm. The catalysed reaction is L-methionine + ATP + H2O = S-adenosyl-L-methionine + phosphate + diphosphate. The protein operates within amino-acid biosynthesis; S-adenosyl-L-methionine biosynthesis; S-adenosyl-L-methionine from L-methionine: step 1/1. Its function is as follows. Catalyzes the formation of S-adenosylmethionine (AdoMet) from methionine and ATP. The overall synthetic reaction is composed of two sequential steps, AdoMet formation and the subsequent tripolyphosphate hydrolysis which occurs prior to release of AdoMet from the enzyme. In Synechococcus sp. (strain RCC307), this protein is S-adenosylmethionine synthase.